Here is a 105-residue protein sequence, read N- to C-terminus: Imizoquin biosynthesis cluster protein I (105 aa).

Positions 1-15 are enriched in polar residues; it reads MSSGEPTTMTPSPSE. Residues 1–43 form a disordered region; the sequence is MSSGEPTTMTPSPSERTPLLSNGSGGAADDGGTTVTISKPNDG.

It participates in secondary metabolite biosynthesis. Its function is as follows. Part of the gene cluster that mediates the biosynthesis of imizoquins A to D, tripeptide-derived alkaloids that serve a protective role against oxidative stress that are essential for normal germination. ImqB is a canonical three-module NRPS that assembles the tripeptide backbone of the imizoquins via condensation of Trp, Tyr, and Leu-derived precursors. N-methylation by imqF and phenol oxidation by imqC, followed by cyclization via the FAD-dependent oxidase imqH carry out the three-step transformation of L-tyrosine into tetrahydroisoquinoline. Importantly, this sequence requires the presence of a free amine in the tyrosine moiety, indicating that isoquinoline formation occurs prior to peptide bond formation. The imidazolidin-4-one ring of imizoquins could form following additional oxidation of the methyl-derived bridgehead carbon by imqH. Lastly, O-methylation by imqG and leucine hydroxylation by imqE complete biosynthesis of the imizoquins. The polypeptide is Imizoquin biosynthesis cluster protein I (Aspergillus flavus (strain ATCC 200026 / FGSC A1120 / IAM 13836 / NRRL 3357 / JCM 12722 / SRRC 167)).